We begin with the raw amino-acid sequence, 254 residues long: Protein GVQW3 (254 aa).

The chain is Protein GVQW3 from Homo sapiens (Human).